The chain runs to 430 residues: Anaerobic glycerol-3-phosphate dehydrogenase subunit B (430 aa).

This sequence belongs to the anaerobic G-3-P dehydrogenase subunit B family. Composed of a catalytic GlpA/B dimer and of membrane bound GlpC. FMN is required as a cofactor.

It carries out the reaction a quinone + sn-glycerol 3-phosphate = dihydroxyacetone phosphate + a quinol. The protein operates within polyol metabolism; glycerol degradation via glycerol kinase pathway; glycerone phosphate from sn-glycerol 3-phosphate (anaerobic route): step 1/1. Functionally, conversion of glycerol 3-phosphate to dihydroxyacetone. Uses fumarate or nitrate as electron acceptor. The sequence is that of Anaerobic glycerol-3-phosphate dehydrogenase subunit B from Actinobacillus succinogenes (strain ATCC 55618 / DSM 22257 / CCUG 43843 / 130Z).